Reading from the N-terminus, the 378-residue chain is Dof zinc finger protein 1 (378 aa).

Low complexity predominate over residues 28–38 (GANPNPAATAP). The segment at 28-79 (GANPNPAATAPSSVTGGALRGGGGGGAPPVAGGAGAGSTERRARPQKEKALN) is disordered. Positions 45–63 (ALRGGGGGGAPPVAGGAGA) are enriched in gly residues. Over residues 66–77 (TERRARPQKEKA) the composition is skewed to basic and acidic residues. The segment at 78–132 (LNCPRCNSTNTKFCYYNNYSLQQPRYFCKTCRRYWTEGGSLRNVPVGGGSRKNKR) adopts a Dof-type zinc-finger fold. Zn(2+) is bound by residues Cys-80, Cys-83, Cys-105, and Cys-108. Disordered regions lie at residues 116-148 (GSLR…ASTA), 203-222 (SLES…NGRG), and 316-378 (LKPT…GTSW). The span at 133–148 (SSSSAASASPASASTA) shows a compositional bias: low complexity. 3 stretches are compositionally biased toward gly residues: residues 323–338 (GTGG…GVDG), 350–361 (AGGGGGGPGGHD), and 369–378 (MIGGGSGTSW).

Its subcellular location is the nucleus. Its function is as follows. Transcription factor that may transactivate seed storage protein genes in developing seeds. The chain is Dof zinc finger protein 1 from Oryza sativa subsp. japonica (Rice).